A 113-amino-acid chain; its full sequence is Putative glycerol transporter Lin0367 (113 aa).

4 helical membrane-spanning segments follow: residues 3-23 (IGIA…IRMM), 30-50 (EWGA…VWTI), 63-83 (GTVW…ASLL), and 92-112 (VVNL…LSLF).

It localises to the membrane. Could be involved in the glycerol uptake either via facilitated diffusion or active transport. The polypeptide is Putative glycerol transporter Lin0367 (Listeria innocua serovar 6a (strain ATCC BAA-680 / CLIP 11262)).